The primary structure comprises 176 residues: Disulfide bond formation protein B (176 aa).

The Cytoplasmic segment spans residues 1-13 (MQFLNTFSKSRIS). Residues 14–30 (WLLLLLCIVFFEGSALF) traverse the membrane as a helical segment. At 31–48 (FQHGMKLGPCVMCIYERV) the chain is on the periplasmic side. A disulfide bond links Cys-40 and Cys-43. The helical transmembrane segment at 49–64 (AMMGIAFAALLGAIAP) threads the bilayer. Over 65–71 (QYAIIRW) the chain is Cytoplasmic. Residues 72–89 (AGLIAWGYSAVRGLQLSI) traverse the membrane as a helical segment. The Periplasmic portion of the chain corresponds to 90–144 (EHVGYQFNPSPFATCDLFVQFPNWAPLNKWVPWMFEAYGNCAEVVWTFLGQSMPQ). Cys-104 and Cys-130 form a disulfide bridge. A helical membrane pass occupies residues 145–163 (WLVIIFAGNLVALALIVIA). The Cytoplasmic segment spans residues 164–176 (QFFSKKTNTILDM).

This sequence belongs to the DsbB family.

The protein resides in the cell inner membrane. Functionally, required for disulfide bond formation in some periplasmic proteins. Acts by oxidizing the DsbA protein. The polypeptide is Disulfide bond formation protein B (Photobacterium profundum (strain SS9)).